The sequence spans 47 residues: Delta-actitoxin-Ael1a (47 aa).

3 cysteine pairs are disulfide-bonded: Cys4-Cys44, Cys6-Cys34, and Cys27-Cys45.

It belongs to the sea anemone sodium channel inhibitory toxin family. Type I subfamily. As to expression, expressed in ectodermal glands. Not expressed in nematocytes.

The protein localises to the secreted. Binds specifically to voltage-gated sodium channels (Nav), thereby delaying their inactivation during signal transduction. It strongly stimulates mammalian cardiac muscle contraction. Paralyzes the shore crab (C.maenas) by tetanic contractions after intramuscular injection. In Anthopleura elegantissima (Green aggregating anemone), this protein is Delta-actitoxin-Ael1a.